The following is a 1170-amino-acid chain: Glucose transport transcription regulator RGT1 (1170 aa).

Residues 1–22 show a composition bias toward polar residues; that stretch reads MNELNTVSTNSSDSTKNGGTSN. The disordered stretch occupies residues 1–46; the sequence is MNELNTVSTNSSDSTKNGGTSNSPDDMDSAAAASHAIKKRTKASRA. Positions 47–76 form a DNA-binding region, zn(2)-C6 fungal-type; sequence CDQCRKKKIKCDYKDEKGVCSNCQRNGDRC. Positions 77-149 are disordered; the sequence is SFDRVPLKRG…PSTPSRSNSV (73 aa). Basic and acidic residues predominate over residues 99–108; sequence RTNEIQDHNN. Positions 113 to 138 are enriched in low complexity; the sequence is NTFDNSNNTLNNNTGNSGDNGINSNT. A compositionally biased stretch (polar residues) spans 139 to 149; it reads VPSTPSRSNSV. 4 positions are modified to phosphoserine: Ser202, Ser205, Ser208, and Ser229. 5 disordered regions span residues 226-254, 269-288, 293-323, 384-506, and 944-977; these read VQQS…SASG, APTD…IPSL, SNSL…LQQG, AQQT…HPMT, and NYRP…SAAP. Residues 239-250 are compositionally biased toward low complexity; sequence SGNANGSVTGSG. Basic and acidic residues predominate over residues 271–280; it reads TDDHNGEQTR. Phosphoserine is present on residues Ser283 and Ser284. Low complexity-rich tracts occupy residues 293 to 302, 309 to 323, and 385 to 397; these read SNSLLLGGQP, QQSQ…LQQG, and QQTQ…QVPQ. Phosphoserine is present on residues Ser410 and Ser414. Residues 411 to 422 show a composition bias toward polar residues; sequence APVSVTLSTDRL. A compositionally biased stretch (low complexity) spans 424–444; sequence GNENNNGEINNNNGSNNSGSS. Positions 445–457 are enriched in polar residues; sequence KDTSQHSQESVTT. Positions 473–488 are enriched in basic residues; the sequence is STKKRRKSYVSKKTKP. Residues 493-506 show a composition bias toward polar residues; it reads SISITSKDSAHPMT. Residue Ser1130 is modified to Phosphoserine.

This sequence belongs to the EDS1/RGT1 family. Glucose-induced phosphorylation regulates the DNA-binding activity. Hyperphosphorylation in cells growing on high levels of glucose does prevents DNA-binding and dephosphorylation restores DNA-binding ability.

Its subcellular location is the nucleus. The protein resides in the cytoplasm. Glucose-responsive transcription factor that regulates expression of several glucose transporter (HXT) genes in response to glucose. In the absence of glucose, it functions as a transcriptional repressor, whereas high concentrations of glucose cause it to function as a transcriptional activator. In cells growing on low levels of glucose, has a neutral role, neither repressing nor activating transcription. Binds the consensus binding site sequence 5'-CGGANNA-3', of which multiple copies are present in all HXT promoters regulated by RGT1. The chain is Glucose transport transcription regulator RGT1 (RGT1) from Saccharomyces cerevisiae (strain RM11-1a) (Baker's yeast).